Here is a 138-residue protein sequence, read N- to C-terminus: RELLDVDGNFLRNGGSYYIVPAFRGKGGGLELARTGSETCPRTVVQAPAEQSRGLPARLSTPPRIRYIGPEFYLTIEFEEQKPPSCLRDSNLQWKVEEESQIVKIASKEEEQLFGSFQIKPYRDDYKLVYCEPQQGGR.

A disulfide bridge connects residues Cys-40 and Cys-86.

The protein belongs to the protease inhibitor I3 (leguminous Kunitz-type inhibitor) family. Heterodimer of an alpha and a beta chain linked by a disulfide bond.

Inhibition of trypsin. The chain is Trypsin inhibitor DE5 alpha chain from Adenanthera pavonina (Sandal bead tree).